The primary structure comprises 541 residues: Chaperonin GroEL 1 (541 aa).

ATP is bound by residues 29–32, 86–90, glycine 413, and aspartate 492; these read TLGP and DGTTT.

The protein belongs to the chaperonin (HSP60) family. As to quaternary structure, forms a cylinder of 14 subunits composed of two heptameric rings stacked back-to-back. Interacts with the co-chaperonin GroES.

The protein localises to the cytoplasm. It catalyses the reaction ATP + H2O + a folded polypeptide = ADP + phosphate + an unfolded polypeptide.. Its function is as follows. Together with its co-chaperonin GroES, plays an essential role in assisting protein folding. The GroEL-GroES system forms a nano-cage that allows encapsulation of the non-native substrate proteins and provides a physical environment optimized to promote and accelerate protein folding. The sequence is that of Chaperonin GroEL 1 from Rhodococcus jostii (strain RHA1).